We begin with the raw amino-acid sequence, 58 residues long: Metallothionein (58 aa).

A beta region spans residues 1–29 (PDPCCAEGTCECEEGKCKAGCKCTSCRCS). 18 residues coordinate a divalent metal cation: cysteine 4, cysteine 5, cysteine 10, cysteine 12, cysteine 17, cysteine 21, cysteine 23, cysteine 26, cysteine 28, cysteine 31, cysteine 34, cysteine 38, cysteine 40, cysteine 46, cysteine 50, cysteine 54, cysteine 56, and cysteine 57. The alpha stretch occupies residues 30–58 (PCEKCTSECECKSKEECAKNCTKPCSCCP).

In terms of biological role, metallothioneins have a high content of cysteine residues that bind various heavy metals. Class I MTS in crustacea are involved in the sequestration of elevated levels of heavy-metal ions. The polypeptide is Metallothionein (Potamon potamios).